A 289-amino-acid chain; its full sequence is Ribonuclease HII (289 aa).

Residues 1 to 55 (MIRDQAKTPGRAKSAAAAKASPAAKGGGNEAAQSAAGKAAAKPAAKPATSKSGKG) form a disordered region. Composition is skewed to low complexity over residues 7 to 24 (KTPGRAKSAAAAKASPAA) and 31 to 55 (AAQSAAGKAAAKPAAKPATSKSGKG). The RNase H type-2 domain maps to 76–264 (WPVAGCDEAG…VVAARRKHQP (189 aa)). Residues Asp82, Glu83, and Asp173 each contribute to the a divalent metal cation site.

Belongs to the RNase HII family. Mn(2+) serves as cofactor. It depends on Mg(2+) as a cofactor.

Its subcellular location is the cytoplasm. It catalyses the reaction Endonucleolytic cleavage to 5'-phosphomonoester.. Functionally, endonuclease that specifically degrades the RNA of RNA-DNA hybrids. The chain is Ribonuclease HII from Bradyrhizobium sp. (strain BTAi1 / ATCC BAA-1182).